The following is a 244-amino-acid chain: Probable transcriptional regulatory protein DMR_30850 (244 aa).

The protein belongs to the TACO1 family.

It localises to the cytoplasm. This is Probable transcriptional regulatory protein DMR_30850 from Solidesulfovibrio magneticus (strain ATCC 700980 / DSM 13731 / RS-1) (Desulfovibrio magneticus).